Consider the following 119-residue polypeptide: Large ribosomal subunit protein uL22 (119 aa).

It belongs to the universal ribosomal protein uL22 family. As to quaternary structure, part of the 50S ribosomal subunit.

Functionally, this protein binds specifically to 23S rRNA; its binding is stimulated by other ribosomal proteins, e.g. L4, L17, and L20. It is important during the early stages of 50S assembly. It makes multiple contacts with different domains of the 23S rRNA in the assembled 50S subunit and ribosome. The globular domain of the protein is located near the polypeptide exit tunnel on the outside of the subunit, while an extended beta-hairpin is found that lines the wall of the exit tunnel in the center of the 70S ribosome. In Bifidobacterium adolescentis (strain ATCC 15703 / DSM 20083 / NCTC 11814 / E194a), this protein is Large ribosomal subunit protein uL22.